Consider the following 291-residue polypeptide: Lipoyl synthase (291 aa).

The [4Fe-4S] cluster site is built by cysteine 33, cysteine 38, cysteine 44, cysteine 59, cysteine 63, cysteine 66, and serine 274. Positions 45–263 (WGEGTATFLI…REAAEAMGFK (219 aa)) constitute a Radical SAM core domain.

It belongs to the radical SAM superfamily. Lipoyl synthase family. Requires [4Fe-4S] cluster as cofactor.

It is found in the cytoplasm. It carries out the reaction [[Fe-S] cluster scaffold protein carrying a second [4Fe-4S](2+) cluster] + N(6)-octanoyl-L-lysyl-[protein] + 2 oxidized [2Fe-2S]-[ferredoxin] + 2 S-adenosyl-L-methionine + 4 H(+) = [[Fe-S] cluster scaffold protein] + N(6)-[(R)-dihydrolipoyl]-L-lysyl-[protein] + 4 Fe(3+) + 2 hydrogen sulfide + 2 5'-deoxyadenosine + 2 L-methionine + 2 reduced [2Fe-2S]-[ferredoxin]. It functions in the pathway protein modification; protein lipoylation via endogenous pathway; protein N(6)-(lipoyl)lysine from octanoyl-[acyl-carrier-protein]: step 2/2. In terms of biological role, catalyzes the radical-mediated insertion of two sulfur atoms into the C-6 and C-8 positions of the octanoyl moiety bound to the lipoyl domains of lipoate-dependent enzymes, thereby converting the octanoylated domains into lipoylated derivatives. The protein is Lipoyl synthase of Pyrobaculum calidifontis (strain DSM 21063 / JCM 11548 / VA1).